The following is a 274-amino-acid chain: 2,3,4,5-tetrahydropyridine-2,6-dicarboxylate N-succinyltransferase (274 aa).

Arg-104 and Asp-141 together coordinate substrate.

Belongs to the transferase hexapeptide repeat family. As to quaternary structure, homotrimer.

It is found in the cytoplasm. The enzyme catalyses (S)-2,3,4,5-tetrahydrodipicolinate + succinyl-CoA + H2O = (S)-2-succinylamino-6-oxoheptanedioate + CoA. The protein operates within amino-acid biosynthesis; L-lysine biosynthesis via DAP pathway; LL-2,6-diaminopimelate from (S)-tetrahydrodipicolinate (succinylase route): step 1/3. In Photorhabdus laumondii subsp. laumondii (strain DSM 15139 / CIP 105565 / TT01) (Photorhabdus luminescens subsp. laumondii), this protein is 2,3,4,5-tetrahydropyridine-2,6-dicarboxylate N-succinyltransferase.